Here is a 262-residue protein sequence, read N- to C-terminus: Insulin-like growth factor-binding protein 1 (262 aa).

The N-terminal stretch at 1-25 (MPEVPAVRAWPLLLSLALQLGAAAG) is a signal peptide. An IGFBP N-terminal domain is found at 28–108 (QPLHCAPCSA…TRGQGACMPA (81 aa)). 6 disulfide bridges follow: Cys-32–Cys-59, Cys-35–Cys-61, Cys-43–Cys-62, Cys-50–Cys-65, Cys-72–Cys-85, and Cys-79–Cys-105. Residues 101–133 (GQGACMPAPSAEATETKDPAAPETTSPESTEMT) are disordered. Over residues 121–131 (APETTSPESTE) the composition is skewed to low complexity. Phosphoserine is present on residues Ser-126, Ser-129, and Ser-147. At Tyr-161 the chain carries Phosphotyrosine. The Thyroglobulin type-1 domain occupies 176–254 (KEPCQRELYK…STAVRGDPKC (79 aa)). Disulfide bonds link Cys-179-Cys-209, Cys-220-Cys-231, and Cys-233-Cys-254. Ser-245 is modified (phosphoserine). The Cell attachment site motif lies at 249–251 (RGD).

As to quaternary structure, binds equally well IGF1 and IGF2. Interacts with integrin ITGA5:ITGB1. Interacts with VHL; this interaction inhibits HIF1A degradation.

The protein resides in the secreted. Its function is as follows. Multifunctional protein that plays a critical role in regulating the availability of IGFs such as IGF1 and IGF2 to their receptors and thereby regulates IGF-mediated cellular processes including cell migration, proliferation, differentiation or apoptosis in a cell-type specific manner. Also plays a positive role in cell migration by interacting with integrin ITGA5:ITGB1 through its RGD motif. Mechanistically, binding to integrins leads to activation of focal adhesion kinase/PTK2 and stimulation of the mitogen-activated protein kinase (MAPK) pathway. Regulates cardiomyocyte apoptosis by suppressing HIF-1alpha/HIF1A degradation through ubiquitination. The sequence is that of Insulin-like growth factor-binding protein 1 (IGFBP1) from Sus scrofa (Pig).